A 220-amino-acid chain; its full sequence is ATP synthase subunit delta (220 aa).

Belongs to the ATPase delta chain family. In terms of assembly, F-type ATPases have 2 components, F(1) - the catalytic core - and F(0) - the membrane proton channel. F(1) has five subunits: alpha(3), beta(3), gamma(1), delta(1), epsilon(1). F(0) has three main subunits: a(1), b(2) and c(10-14). The alpha and beta chains form an alternating ring which encloses part of the gamma chain. F(1) is attached to F(0) by a central stalk formed by the gamma and epsilon chains, while a peripheral stalk is formed by the delta and b chains.

Its subcellular location is the cell inner membrane. Its function is as follows. F(1)F(0) ATP synthase produces ATP from ADP in the presence of a proton or sodium gradient. F-type ATPases consist of two structural domains, F(1) containing the extramembraneous catalytic core and F(0) containing the membrane proton channel, linked together by a central stalk and a peripheral stalk. During catalysis, ATP synthesis in the catalytic domain of F(1) is coupled via a rotary mechanism of the central stalk subunits to proton translocation. Functionally, this protein is part of the stalk that links CF(0) to CF(1). It either transmits conformational changes from CF(0) to CF(1) or is implicated in proton conduction. The protein is ATP synthase subunit delta of Gluconobacter oxydans (strain 621H) (Gluconobacter suboxydans).